The sequence spans 173 residues: Sialic acid TRAP transporter small permease protein SiaQ (173 aa).

4 helical membrane passes run 13–33 (IEEI…TWQI), 46–66 (SEEL…AIAI), 87–107 (LSLV…IIVL), and 123–143 (LGIS…FMVF).

Belongs to the TRAP transporter small permease family. As to quaternary structure, the complex comprises the extracytoplasmic solute receptor protein SiaP, and the two transmembrane proteins SiaQ and SiaM. SiaQ and SiaM form a tight 1:1 complex.

The protein resides in the cell inner membrane. Its function is as follows. Part of the tripartite ATP-independent periplasmic (TRAP) transport system SiaPQM that catalyzes unidirectional Na(+)-dependent sialic acid uptake. The polypeptide is Sialic acid TRAP transporter small permease protein SiaQ (Vibrio cholerae serotype O1 (strain ATCC 39315 / El Tor Inaba N16961)).